We begin with the raw amino-acid sequence, 51 residues long: Sperm protamine P1 (51 aa).

This sequence belongs to the protamine P1 family. Testis.

The protein resides in the nucleus. It is found in the chromosome. Protamines substitute for histones in the chromatin of sperm during the haploid phase of spermatogenesis. They compact sperm DNA into a highly condensed, stable and inactive complex. The protein is Sperm protamine P1 (PRM1) of Piliocolobus badius (Western red colobus).